The primary structure comprises 171 residues: Putative defense protein (171 aa).

A signal peptide spans 1–23 (MKVYACLCAAVVMLVMTSRVSEA). The 148-residue stretch at 24–171 (RSTGAPLSAC…VQSAPIKIVS (148 aa)) folds into the Reelin domain. Cysteines 33 and 110 form a disulfide. Asparagine 41 carries an N-linked (GlcNAc...) asparagine glycan.

The protein belongs to the insect defense protein family.

Its subcellular location is the secreted. Functionally, may have antimicrobial activity. The polypeptide is Putative defense protein (Bombyx mori (Silk moth)).